Here is a 316-residue protein sequence, read N- to C-terminus: Olfactory receptor 12D3 (316 aa).

Over 1-23 the chain is Extracellular; the sequence is MENVTTMNEFLLLGLTGVQELQP. N3 carries an N-linked (GlcNAc...) asparagine glycan. Residues 24 to 44 form a helical membrane-spanning segment; the sequence is FFFGIFLIIYLINLIGNGSIL. Residues 45–52 are Cytoplasmic-facing; it reads VMVVLEPQ. The chain crosses the membrane as a helical span at residues 53–73; that stretch reads LHSPMYFFLGNLSCLDISYSS. The Extracellular segment spans residues 74–97; that stretch reads VTLPKLLVNLVCSRRAISFLGCIT. A disulfide bond links C95 and C187. Residues 98–118 traverse the membrane as a helical segment; the sequence is QLHFFHFLGSTEAILLAIMAF. The Cytoplasmic segment spans residues 119–137; sequence DRFVAICNPLRYTVIMNPQ. A helical membrane pass occupies residues 138–158; it reads VCILLAAAAWLISFFYALMHS. Topologically, residues 159 to 195 are extracellular; that stretch reads VMTAHLSFCGSQKLNHFFYDVKPLLELACSDTLLNQW. A helical membrane pass occupies residues 196-215; the sequence is LLSIVTGSISMGAFFLTLLS. Residues 216–236 are Cytoplasmic-facing; the sequence is CFYVIGFLLFKNRSCRILHKA. The chain crosses the membrane as a helical span at residues 237-257; that stretch reads LSTCASHFMVVCLFYGPVGFT. The Extracellular segment spans residues 258–270; that stretch reads YIRPASATSMIQD. Residues 271 to 291 form a helical membrane-spanning segment; sequence RIMAIMYSAVTPVLNPLIYTL. The Cytoplasmic portion of the chain corresponds to 292 to 316; that stretch reads RNKEVMMALKKIFGRKLFKDWQQHH.

Belongs to the G-protein coupled receptor 1 family.

It is found in the cell membrane. Its function is as follows. Odorant receptor. The chain is Olfactory receptor 12D3 (OR12D3) from Homo sapiens (Human).